Here is a 310-residue protein sequence, read N- to C-terminus: Ribosomal RNA small subunit methyltransferase H (310 aa).

S-adenosyl-L-methionine is bound by residues 32–34 (GGH), D52, A83, D100, and Q107.

This sequence belongs to the methyltransferase superfamily. RsmH family.

It localises to the cytoplasm. It catalyses the reaction cytidine(1402) in 16S rRNA + S-adenosyl-L-methionine = N(4)-methylcytidine(1402) in 16S rRNA + S-adenosyl-L-homocysteine + H(+). In terms of biological role, specifically methylates the N4 position of cytidine in position 1402 (C1402) of 16S rRNA. This chain is Ribosomal RNA small subunit methyltransferase H, found in Geobacillus sp. (strain WCH70).